The sequence spans 20 residues: Snaclec ophioluxin subunit alpha (20 aa).

Residues C4 and C15 are joined by a disulfide bond. A C-type lectin domain is found at 11–20 (YDQHCYRIIN).

It belongs to the snaclec family. Heterodimer of subunits alpha and beta; disulfide-linked. Expressed by the venom gland.

The protein resides in the secreted. Its function is as follows. Binds to the platelet and collagen receptor glycoprotein VI (GP6) and activates platelet aggregation. The sequence is that of Snaclec ophioluxin subunit alpha from Ophiophagus hannah (King cobra).